The sequence spans 329 residues: Microtubule-associated protein RP/EB family member 1C (329 aa).

Positions 13–115 (FVGRSEILAW…FMQWMKKYCD (103 aa)) constitute a Calponin-homology (CH) domain. Residues 130 to 141 (REASKGGKEATK) show a composition bias toward basic and acidic residues. The segment at 130 to 203 (REASKGGKEA…SAKQSKPVPA (74 aa)) is disordered. A compositionally biased stretch (low complexity) spans 174–185 (SNNTGTHHSSTG). In terms of domain architecture, EB1 C-terminal spans 193 to 263 (PSAKQSKPVP…LYAADGEDVG (71 aa)). A required for nuclear localization region spans residues 289–311 (KRKLIVNLDVDVAAITTLSPRQR).

It belongs to the MAPRE family. As to quaternary structure, homodimer. Highly expressed in the root and shoot meristems, in guard cells of leaf stomata, pollen grains and pollen tubes.

It localises to the nucleus. The protein localises to the cytoplasm. It is found in the cytoskeleton. The protein resides in the spindle. Its subcellular location is the phragmoplast. In terms of biological role, plant-specific EB1 subtype that functions preferentially at early stages of plant mitosis by regulating spindle positioning and chromosome segregation. Accumulates in the prophase nucleus and is required to maintain spindle bipolarity during premetaphase and/or metaphase and for efficient segregation of chromosomes at anaphase. May play a role in the dynamics of microtubule network in elongating pollen tubes. This is Microtubule-associated protein RP/EB family member 1C (EB1C) from Arabidopsis thaliana (Mouse-ear cress).